Here is a 200-residue protein sequence, read N- to C-terminus: Recombination protein RecR (200 aa).

The C4-type zinc-finger motif lies at 59 to 74; it reads CDICGNVCETSPCPVC. The Toprim domain maps to 82 to 177; the sequence is SVICVVEEPK…KVTRLASGLP (96 aa).

It belongs to the RecR family.

Functionally, may play a role in DNA repair. It seems to be involved in an RecBC-independent recombinational process of DNA repair. It may act with RecF and RecO. In Bifidobacterium adolescentis (strain ATCC 15703 / DSM 20083 / NCTC 11814 / E194a), this protein is Recombination protein RecR.